Reading from the N-terminus, the 600-residue chain is NADH-quinone oxidoreductase subunit C/D (600 aa).

An NADH dehydrogenase I subunit C region spans residues 1-190; the sequence is MVNNMTDLTA…DPFELTKAKQ (190 aa). The interval 214-600 is NADH dehydrogenase I subunit D; the sequence is DFMFLNLGPN…IDFVMSDVDR (387 aa).

It in the N-terminal section; belongs to the complex I 30 kDa subunit family. In the C-terminal section; belongs to the complex I 49 kDa subunit family. As to quaternary structure, NDH-1 is composed of 13 different subunits. Subunits NuoB, CD, E, F, and G constitute the peripheral sector of the complex.

It is found in the cell inner membrane. The catalysed reaction is a quinone + NADH + 5 H(+)(in) = a quinol + NAD(+) + 4 H(+)(out). In terms of biological role, NDH-1 shuttles electrons from NADH, via FMN and iron-sulfur (Fe-S) centers, to quinones in the respiratory chain. The immediate electron acceptor for the enzyme in this species is believed to be ubiquinone. Couples the redox reaction to proton translocation (for every two electrons transferred, four hydrogen ions are translocated across the cytoplasmic membrane), and thus conserves the redox energy in a proton gradient. The protein is NADH-quinone oxidoreductase subunit C/D of Salmonella paratyphi C (strain RKS4594).